The chain runs to 203 residues: Small ribosomal subunit protein uS4 (203 aa).

One can recognise an S4 RNA-binding domain in the interval arginine 93 to alanine 173.

The protein belongs to the universal ribosomal protein uS4 family. Part of the 30S ribosomal subunit. Contacts protein S5. The interaction surface between S4 and S5 is involved in control of translational fidelity.

Functionally, one of the primary rRNA binding proteins, it binds directly to 16S rRNA where it nucleates assembly of the body of the 30S subunit. Its function is as follows. With S5 and S12 plays an important role in translational accuracy. This is Small ribosomal subunit protein uS4 from Chlorobium phaeobacteroides (strain DSM 266 / SMG 266 / 2430).